A 182-amino-acid chain; its full sequence is Large ribosomal subunit protein uL6 (182 aa).

This sequence belongs to the universal ribosomal protein uL6 family. As to quaternary structure, part of the 50S ribosomal subunit.

This protein binds to the 23S rRNA, and is important in its secondary structure. It is located near the subunit interface in the base of the L7/L12 stalk, and near the tRNA binding site of the peptidyltransferase center. This is Large ribosomal subunit protein uL6 from Nostoc sp. (strain PCC 7120 / SAG 25.82 / UTEX 2576).